The following is a 365-amino-acid chain: DNA replication and repair protein RecF (365 aa).

Residue 30–37 (GRNAQGKT) coordinates ATP.

The protein belongs to the RecF family.

The protein resides in the cytoplasm. Its function is as follows. The RecF protein is involved in DNA metabolism; it is required for DNA replication and normal SOS inducibility. RecF binds preferentially to single-stranded, linear DNA. It also seems to bind ATP. The protein is DNA replication and repair protein RecF of Streptococcus pneumoniae (strain CGSP14).